Consider the following 185-residue polypeptide: Translation initiation factor IF-3, chloroplastic (185 aa).

The protein belongs to the IF-3 family. In terms of assembly, monomer.

Its subcellular location is the plastid. The protein localises to the chloroplast. In terms of biological role, IF-3 binds to the 30S ribosomal subunit and shifts the equilibrium between 70S ribosomes and their 50S and 30S subunits in favor of the free subunits, thus enhancing the availability of 30S subunits on which protein synthesis initiation begins. In Cyanidium caldarium (Red alga), this protein is Translation initiation factor IF-3, chloroplastic.